Reading from the N-terminus, the 498-residue chain is NADPH:adrenodoxin oxidoreductase, mitochondrial (498 aa).

Residues 1–37 (MSTHKAALCKVQILKLFLISARCVRITRFYGVCGLST) constitute a mitochondrion transit peptide. Residues Ala-54, Glu-75, Leu-83, and Val-119 each contribute to the FAD site. NADP(+)-binding positions include 190-193 (QGNV), 234-235 (RR), and Glu-246. FAD is bound by residues Trp-404 and 411 to 413 (GVI). Gly-411 contributes to the NADP(+) binding site. Residues 469–488 (DSEETRRGETRGKPREKMLD) show a composition bias toward basic and acidic residues. The disordered stretch occupies residues 469–489 (DSEETRRGETRGKPREKMLDV).

It belongs to the ferredoxin--NADP reductase type 1 family. FAD is required as a cofactor.

It is found in the mitochondrion inner membrane. The enzyme catalyses 2 reduced [adrenodoxin] + NADP(+) + H(+) = 2 oxidized [adrenodoxin] + NADPH. Its pathway is steroid metabolism; cholesterol metabolism. Functionally, serves as the first electron transfer protein in all the mitochondrial P450 systems including cholesterol side chain cleavage in all steroidogenic tissues, steroid 11-beta hydroxylation in the adrenal cortex, 25-OH-vitamin D3-24 hydroxylation in the kidney, and sterol C-27 hydroxylation in the liver. The chain is NADPH:adrenodoxin oxidoreductase, mitochondrial (fdxr) from Salvelinus fontinalis (Brook trout).